An 88-amino-acid polypeptide reads, in one-letter code: Phosphocarrier protein HPr (88 aa).

The HPr domain maps to 1–88 (MKKFQAVIKD…KACLEKNKVI (88 aa)). The Pros-phosphohistidine intermediate role is filled by H15. The residue at position 47 (S47) is a Phosphoserine; by HPrK/P.

This sequence belongs to the HPr family.

It is found in the cytoplasm. Its activity is regulated as follows. Phosphorylation on Ser-47 inhibits the phosphoryl transfer from enzyme I to HPr. Functionally, general (non sugar-specific) component of the phosphoenolpyruvate-dependent sugar phosphotransferase system (sugar PTS). This major carbohydrate active-transport system catalyzes the phosphorylation of incoming sugar substrates concomitantly with their translocation across the cell membrane. The phosphoryl group from phosphoenolpyruvate (PEP) is transferred to the phosphoryl carrier protein HPr by enzyme I. Phospho-HPr then transfers it to the PTS EIIA domain. In terms of biological role, P-Ser-HPr interacts with the catabolite control protein A (CcpA), forming a complex that binds to DNA at the catabolite response elements cre, operator sites preceding a large number of catabolite-regulated genes. Thus, P-Ser-HPr is a corepressor in carbon catabolite repression (CCR), a mechanism that allows bacteria to coordinate and optimize the utilization of available carbon sources. P-Ser-HPr also plays a role in inducer exclusion, in which it probably interacts with several non-PTS permeases and inhibits their transport activity. The sequence is that of Phosphocarrier protein HPr (ptsH) from Mycoplasma genitalium (strain ATCC 33530 / DSM 19775 / NCTC 10195 / G37) (Mycoplasmoides genitalium).